The chain runs to 245 residues: MKLVLDTHTHTISSGHAYSTITENAREAYKKGLQLICMTDHGPKMPGAAHLWYFGNLKVLPEKIEGVEILKGVEVNIMDEEGNLDLPEGILKKLDIVIASLHDVCFEPSDDIERNTKAIINAIKNPYVDIIGHPGNPIYPIDIEKVLMAAKEYGKFIEINNSSFVSSRKGSEENCFLIAKKAKEMGVKIAVGSDAHVSFDVGRFEEALKVIKNAGITEDLVLNTDVGKIKEYLKEKKRKIGGEEE.

Zn(2+) contacts are provided by H8, H10, H16, H41, E74, H102, H133, D194, and H196.

Belongs to the PHP family. The cofactor is Zn(2+).

In Thermoanaerobacter sp. (strain X514), this protein is Probable phosphatase Teth514_1060.